The primary structure comprises 1296 residues: Histone-lysine N-methyltransferase EHMT1 (1296 aa).

Disordered stretches follow at residues 1-111 (MAAA…NHVT) and 170-200 (PQTP…TDVR). A2 carries the N-acetylalanine modification. The segment covering 14–31 (QETKQDCCMKTELLREDT) has biased composition (basic and acidic residues). K23 is covalently cross-linked (Glycyl lysine isopeptide (Lys-Gly) (interchain with G-Cter in SUMO1); alternate). K23 participates in a covalent cross-link: Glycyl lysine isopeptide (Lys-Gly) (interchain with G-Cter in SUMO2); alternate. Positions 77-89 (NTRASPQEGTNRV) are enriched in polar residues. Positions 97-106 (VSERDTEVGK) are enriched in basic and acidic residues. Residues K191, K229, K232, K315, and K325 each participate in a glycyl lysine isopeptide (Lys-Gly) (interchain with G-Cter in SUMO2) cross-link. The tract at residues 341 to 470 (SLEMDSEDED…SSPGSMEQAA (130 aa)) is disordered. A compositionally biased stretch (acidic residues) spans 342–360 (LEMDSEDEDSDELEDDEDH). Positions 371–391 (EDSRTSKESMSETDRAAKMDG) are enriched in basic and acidic residues. Residues 392-414 (DSEEEQESPDTGEDEDGGDESDL) show a composition bias toward acidic residues. K430 participates in a covalent cross-link: Glycyl lysine isopeptide (Lys-Gly) (interchain with G-Cter in SUMO2). S433 bears the Phosphoserine mark. Residues 438–450 (PARKRRRRSRKKP) are compositionally biased toward basic residues. At S481 the chain carries Phosphoserine. Glycyl lysine isopeptide (Lys-Gly) (interchain with G-Cter in SUMO2) cross-links involve residues K559, K644, K659, and K729. The segment at 653-714 (LAPGQEKSLA…PTSGLSQGPG (62 aa)) is disordered. ANK repeat units follow at residues 735–764 (FHPK…DPNF), 770–799 (SKRS…NIDT), 803–832 (DQRT…QVDP), 836–866 (EGST…DVNC), 870–899 (GGWT…DINI), 903–932 (EENI…DLHA), 936–965 (HGDS…DVTL), and 969–1002 (EGET…DKPV). Positions 903 to 905 (EEN) are histone H3K9me binding. Residue S1046 is modified to Phosphoserine. Residues 1058–1121 (QYCVCVDDCS…NCRNRVVQNG (64 aa)) enclose the Pre-SET domain. C1060, C1062, C1066, C1071, C1073, C1103, C1107, C1109, and C1113 together coordinate Zn(2+). The region spanning 1124 to 1241 (ARLQLYRTQD…AGEQLGFDYG (118 aa)) is the SET domain. S-adenosyl-L-methionine-binding positions include 1134–1136 (MGW), Y1171, and 1198–1199 (NH). An interaction with histone H3 region spans residues 1160–1179 (DSEADVREEDSYLFDLDNKD). C1201 is a binding site for Zn(2+). The interval 1240-1243 (YGER) is interaction with histone H3. Zn(2+) is bound at residue C1254. Residue R1255 coordinates S-adenosyl-L-methionine. Residues C1256 and C1261 each contribute to the Zn(2+) site. The tract at residues 1271–1296 (RQASAAQEPQENGLPDTSSAAAADPL) is disordered.

This sequence belongs to the class V-like SAM-binding methyltransferase superfamily. In terms of assembly, interacts with WIZ. Part of the E2F6.com-1 complex in G0 phase composed of E2F6, MGA, MAX, TFDP1, CBX3, BAT8, EHMT1, RING1, RNF2, MBLR, L3MBTL2 and YAF2. Interacts with MPHOSPH8. Interacts with CDYL. Interacts with REST only in the presence of CDYL. Part of a complex containing at least CDYL, REST, WIZ, SETB1, EHMT1 and EHMT2. Heterodimer; heterodimerizes with EHMT2. Interacts (via ANK repeats) with RELA (when monomethylated at 'Lys-310'). Interacts with Baz2b. Ubiquitous.

It localises to the nucleus. Its subcellular location is the chromosome. The catalysed reaction is N(6)-methyl-L-lysyl(9)-[histone H3] + S-adenosyl-L-methionine = N(6),N(6)-dimethyl-L-lysyl(9)-[histone H3] + S-adenosyl-L-homocysteine + H(+). The enzyme catalyses L-lysyl(9)-[histone H3] + S-adenosyl-L-methionine = N(6)-methyl-L-lysyl(9)-[histone H3] + S-adenosyl-L-homocysteine + H(+). Its activity is regulated as follows. Methyltransferase activity is inhibited by BIX-01294. Efficiently inhibited by compound E72, a BIX-01294 derivative in which the diazepane ring and the benzyl are replaced with a 3-dimethylaminopropyl and a 5-aminopentyl group at sites B and C, respectively. Histone methyltransferase that specifically mono- and dimethylates 'Lys-9' of histone H3 (H3K9me1 and H3K9me2, respectively) in euchromatin. H3K9me represents a specific tag for epigenetic transcriptional repression by recruiting HP1 proteins to methylated histones. Also weakly methylates 'Lys-27' of histone H3 (H3K27me). Also required for DNA methylation, the histone methyltransferase activity is not required for DNA methylation, suggesting that these 2 activities function independently. Probably targeted to histone H3 by different DNA-binding proteins like E2F6, MGA, MAX and/or DP1. During G0 phase, it probably contributes to silencing of MYC- and E2F-responsive genes, suggesting a role in G0/G1 transition in cell cycle. In addition to the histone methyltransferase activity, also methylates non-histone proteins: mediates dimethylation of 'Lys-373' of p53/TP53. Represses the expression of mitochondrial function-related genes, perhaps by occupying their promoter regions, working in concert with probable chromatin reader Baz2b. This is Histone-lysine N-methyltransferase EHMT1 (Ehmt1) from Mus musculus (Mouse).